The sequence spans 592 residues: Inactive metallocarboxypeptidase ECM14 (592 aa).

Positions 1–21 are cleaved as a signal peptide; it reads MRQFTHGTLLAILALANTISA. The propeptide occupies 22 to 174; it reads IPSFSANNYP…QTVYESYPSS (153 aa). Over residues 170–179 the composition is skewed to polar residues; sequence SYPSSSQRPT. Positions 170–191 are disordered; it reads SYPSSSQRPTDNGRGFLPSRES. The Peptidase M14 domain occupies 202–521; it reads DYQPLSVIGP…NAVMVLGKFL (320 aa). Zn(2+) is bound by residues His-264 and Glu-267. Substrate is bound by residues 264-267, Arg-322, and 339-340; these read HARE and DR. Cys-333 and Cys-356 form a disulfide bridge. Asn-349 is a glycosylation site (N-linked (GlcNAc...) asparagine). Residue His-396 participates in Zn(2+) binding. 397–398 lines the substrate pocket; it reads SY. Positions 542 to 592 are disordered; sequence ADKPILDDGDDDEEEDGQDKNDDSWIPDEYKNDNDHDDDDDGWGLRRRRKR. A compositionally biased stretch (acidic residues) spans 548–558; sequence DDGDDDEEEDG. The segment covering 559-575 has biased composition (basic and acidic residues); the sequence is QDKNDDSWIPDEYKNDN.

The protein belongs to the peptidase M14 family. Zn(2+) serves as cofactor.

The protein resides in the vacuole. It localises to the secreted. In terms of biological role, inactive carboxypeptidase that may play a role in cell wall organization and biogenesis. The sequence is that of Inactive metallocarboxypeptidase ECM14 (ECM14) from Blastomyces gilchristii (strain SLH14081) (Blastomyces dermatitidis).